A 458-amino-acid polypeptide reads, in one-letter code: UDP-N-acetylmuramoylalanine--D-glutamate ligase (458 aa).

Position 119 to 125 (119 to 125 (GSNGKTT)) interacts with ATP.

It belongs to the MurCDEF family.

The protein resides in the cytoplasm. The catalysed reaction is UDP-N-acetyl-alpha-D-muramoyl-L-alanine + D-glutamate + ATP = UDP-N-acetyl-alpha-D-muramoyl-L-alanyl-D-glutamate + ADP + phosphate + H(+). The protein operates within cell wall biogenesis; peptidoglycan biosynthesis. In terms of biological role, cell wall formation. Catalyzes the addition of glutamate to the nucleotide precursor UDP-N-acetylmuramoyl-L-alanine (UMA). This chain is UDP-N-acetylmuramoylalanine--D-glutamate ligase, found in Limosilactobacillus fermentum (strain NBRC 3956 / LMG 18251) (Lactobacillus fermentum).